Consider the following 130-residue polypeptide: Phosphomevalonate dehydratase small subunit (130 aa).

Serine 62 (proton acceptor) is an active-site residue.

Belongs to the AcnX type II small subunit family. In terms of assembly, heterodimer composed of a large subunit (PMDh-L) and a small subunit (PMDh-S).

It catalyses the reaction (R)-5-phosphomevalonate = (2E)-3-methyl-5-phosphooxypent-2-enoate + H2O. Its pathway is isoprenoid biosynthesis; isopentenyl diphosphate biosynthesis via mevalonate pathway. Functionally, component of a hydro-lyase that catalyzes the dehydration of mevalonate 5-phosphate (MVA5P) to form trans-anhydromevalonate 5-phosphate (tAHMP). Involved in the archaeal mevalonate (MVA) pathway, which provides fundamental precursors for isoprenoid biosynthesis, such as isopentenyl diphosphate (IPP) and dimethylallyl diphosphate (DMAPP). The sequence is that of Phosphomevalonate dehydratase small subunit from Pyrococcus abyssi (strain GE5 / Orsay).